The primary structure comprises 910 residues: Protein translocase subunit SecA (910 aa).

ATP is bound by residues Gln86, 104 to 108, and Asp508; that span reads GEGKT. 4 residues coordinate Zn(2+): Cys894, Cys896, Cys905, and Cys906.

The protein belongs to the SecA family. In terms of assembly, monomer and homodimer. Part of the essential Sec protein translocation apparatus which comprises SecA, SecYEG and auxiliary proteins SecDF. Other proteins may also be involved. Zn(2+) serves as cofactor.

The protein localises to the cell membrane. It is found in the cytoplasm. It carries out the reaction ATP + H2O + cellular proteinSide 1 = ADP + phosphate + cellular proteinSide 2.. Part of the Sec protein translocase complex. Interacts with the SecYEG preprotein conducting channel. Has a central role in coupling the hydrolysis of ATP to the transfer of proteins into and across the cell membrane, serving as an ATP-driven molecular motor driving the stepwise translocation of polypeptide chains across the membrane. The sequence is that of Protein translocase subunit SecA from Acetivibrio thermocellus (strain ATCC 27405 / DSM 1237 / JCM 9322 / NBRC 103400 / NCIMB 10682 / NRRL B-4536 / VPI 7372) (Clostridium thermocellum).